A 663-amino-acid chain; its full sequence is Alpha-amylase MalA (663 aa).

Disordered regions lie at residues 1-28 (MHHPGPPRFVATGDEVELAPRDPDPTAT) and 80-135 (GTLE…LTLR). The span at 92–111 (RSGGHSGGVSGGRSGPGRSG) shows a compositional bias: gly residues. The active-site Nucleophile is Asp-411. The active-site Proton donor is Glu-440.

Belongs to the glycosyl hydrolase 13 family.

It is found in the cytoplasm. The enzyme catalyses Endohydrolysis of (1-&gt;4)-alpha-D-glucosidic linkages in polysaccharides containing three or more (1-&gt;4)-alpha-linked D-glucose units.. The protein operates within glycan degradation; starch degradation. Stable and active over a broad range of NaCl concentrations (0.5 to 4.2 M NaCl), with maximal activity at 2.6 M NaCl. 83% and 94% of the maximum activity at 0.6 and 4.2 M NaCl, respectively. Active and stable also in KCl. Its function is as follows. Alpha-amylase that cleaves starch into oligosaccharides, the first step in starch degradation. Endo-acting enzyme which prefers a linear polysaccharide to branched polysaccharides hydrolyzing alpha-1,4 glucosidic bonds efficiently. Also has transglycosylation activity, but does not act on alpha-1,6 bonds. Higher activities of 100%, 79% and 67.8% against amylose, soluble starch and amylopectin, respectively. Lower activity of 22% against glycogen and faint or no activity against alpha-, beta- and gamma-cyclodextrin. In Haloarcula japonica (strain ATCC 49778 / DSM 6131 / JCM 7785 / NBRC 101032 / NCIMB 13157 / TR-1), this protein is Alpha-amylase MalA.